Here is a 626-residue protein sequence, read N- to C-terminus: DNA polymerase 2 (626 aa).

Belongs to the DNA polymerase type-B family.

It catalyses the reaction DNA(n) + a 2'-deoxyribonucleoside 5'-triphosphate = DNA(n+1) + diphosphate. This polymerase is devoid of exonuclease activity. In Saccharolobus solfataricus (strain ATCC 35092 / DSM 1617 / JCM 11322 / P2) (Sulfolobus solfataricus), this protein is DNA polymerase 2 (dpo2).